The chain runs to 986 residues: Probable serine/threonine-protein kinase DDB_G0272092 (986 aa).

Residues 1–107 (MARKIGSVRI…EYIVDTTKWY (107 aa)) enclose the C2 domain. The Ca(2+) site is built by Asp22, Asp28, Asp76, Asp78, Ser81, and Asp84. ANK repeat units lie at residues 137-167 (PEKS…DYTI), 171-201 (EGTP…RVSI), 205-238 (HGNT…GIND), 242-274 (LGET…IINH), 278-307 (TRDT…NVMI), and 312-344 (PSRT…WLNE). An SAM domain is found at 333–396 (EKVIEISDWL…LRAVRKIKDP (64 aa)). Residues 412–438 (HVENDNNNNNNNNNNNNNSQEQCNINN) show a composition bias toward low complexity. Disordered regions lie at residues 412 to 520 (HVEN…SNTT) and 532 to 574 (TTLT…PEGP). Residues 439-448 (DSLGSGNRNS) are compositionally biased toward polar residues. The segment covering 454–464 (QNQNNTLNNNN) has biased composition (low complexity). Polar residues predominate over residues 465–476 (VESKSTGNLNSL). Composition is skewed to low complexity over residues 493–520 (NILS…SNTT) and 546–571 (TEST…TVTP). In terms of domain architecture, Protein kinase spans 601–870 (LTYNVLLGTG…ELLKIRDEYN (270 aa)). ATP-binding positions include 607–615 (LGTGASGKV) and Lys628. Asp722 serves as the catalytic Proton acceptor. Composition is skewed to low complexity over residues 901 to 913 (DSNN…NNNN) and 928 to 947 (SNSN…SDNN). The interval 901-986 (DSNNINNNNN…SPMEPKSIKK (86 aa)) is disordered. 2 stretches are compositionally biased toward polar residues: residues 948-959 (ISEPATTDSITK) and 969-978 (LTRTRSSSSP).

The protein belongs to the protein kinase superfamily. TKL Ser/Thr protein kinase family. Requires Ca(2+) as cofactor.

The catalysed reaction is L-seryl-[protein] + ATP = O-phospho-L-seryl-[protein] + ADP + H(+). It catalyses the reaction L-threonyl-[protein] + ATP = O-phospho-L-threonyl-[protein] + ADP + H(+). In Dictyostelium discoideum (Social amoeba), this protein is Probable serine/threonine-protein kinase DDB_G0272092.